We begin with the raw amino-acid sequence, 809 residues long: Phenylalanine--tRNA ligase beta subunit (809 aa).

The 115-residue stretch at 39 to 153 (APPFSQIVVG…EDTPVGADIR (115 aa)) folds into the tRNA-binding domain. One can recognise a B5 domain in the interval 404-479 (PKREPVRMRV…RIYGFEQIPA (76 aa)). Mg(2+)-binding residues include D457, D463, E466, and E467. An FDX-ACB domain is found at 706-808 (PRVPAVTRDI…AGDAFGARLR (103 aa)).

It belongs to the phenylalanyl-tRNA synthetase beta subunit family. Type 1 subfamily. As to quaternary structure, tetramer of two alpha and two beta subunits. It depends on Mg(2+) as a cofactor.

It localises to the cytoplasm. The catalysed reaction is tRNA(Phe) + L-phenylalanine + ATP = L-phenylalanyl-tRNA(Phe) + AMP + diphosphate + H(+). The chain is Phenylalanine--tRNA ligase beta subunit from Ralstonia nicotianae (strain ATCC BAA-1114 / GMI1000) (Ralstonia solanacearum).